The chain runs to 275 residues: MANIKAKKYYSYAKINLFLHILNKRPDGYHNLQTWFTFLDLKDQLTFSFNNSREINISSNISIAAKQDNLVYKAIKKFQQSYRVQDIGVDIEIKKNIPMGAGLGGGSSNAATTLIALRDYYLPQLSNEEMIPLAAKLGADVPIFVYGKSAWAEGIGEILYHKDFSPQYALLIKPDIHISTKEFFTSEDLIKSSVLISKDLGFDKSIMHNDFENVFYAKYPEFSQYLKELDSDFRMTGTGSCFYLLSADKNKLEQLARKINKPLDKWLVKTLNYVY.

The active site involves K14. Position 98-108 (98-108) interacts with ATP; that stretch reads PMGAGLGGGSS. Residue D140 is part of the active site.

This sequence belongs to the GHMP kinase family. IspE subfamily.

The enzyme catalyses 4-CDP-2-C-methyl-D-erythritol + ATP = 4-CDP-2-C-methyl-D-erythritol 2-phosphate + ADP + H(+). Its pathway is isoprenoid biosynthesis; isopentenyl diphosphate biosynthesis via DXP pathway; isopentenyl diphosphate from 1-deoxy-D-xylulose 5-phosphate: step 3/6. Catalyzes the phosphorylation of the position 2 hydroxy group of 4-diphosphocytidyl-2C-methyl-D-erythritol. This Francisella tularensis subsp. tularensis (strain FSC 198) protein is 4-diphosphocytidyl-2-C-methyl-D-erythritol kinase.